The following is a 173-amino-acid chain: Dual-action ribosomal maturation protein DarP (173 aa).

This sequence belongs to the DarP family.

The protein localises to the cytoplasm. Functionally, member of a network of 50S ribosomal subunit biogenesis factors which assembles along the 30S-50S interface, preventing incorrect 23S rRNA structures from forming. Promotes peptidyl transferase center (PTC) maturation. The sequence is that of Dual-action ribosomal maturation protein DarP from Pseudomonas syringae pv. tomato (strain ATCC BAA-871 / DC3000).